Consider the following 220-residue polypeptide: Type IV major pilin protein PilA (220 aa).

Residues 1-12 constitute a propeptide, leader sequence; it reads MRVSRFNPRNRG. At Phe-13 the chain carries N-methylphenylalanine. A helical transmembrane segment spans residues 13–33; it reads FTLIELMIVVAIIGILAAIAI.

It belongs to the N-Me-Phe pilin family.

The protein resides in the fimbrium. It is found in the membrane. The two-component PilS2/PilR2 is required for proper assembly of T4P and regulation. Functionally, major component of the type IV pili that are required for social gliding motility through cycles of extension and retraction. Extended pili are composed of thousands of copies of PilA and retract upon binding to extracellular polysaccharides and thereby pull the cell forward. The polypeptide is Type IV major pilin protein PilA (pilA) (Myxococcus xanthus (strain DK1622)).